The following is a 121-amino-acid chain: MNAYTVSRLALDAGVSVHIVRDYLLRGLLRPVACTTGGYGLFDDAALQRLCFVRAAFEAGIGLGALARLCRALDAANCDETAAQLAVLRQFVERRREALANLEVQLAAMPTAPAQHAESLP.

An HTH merR-type domain is found at 3-72 (AYTVSRLALD…LGALARLCRA (70 aa)). Positions 6–25 (VSRLALDAGVSVHIVRDYLL) form a DNA-binding region, H-T-H motif.

The polypeptide is HTH-type transcriptional regulator MerD (merD) (Serratia marcescens).